We begin with the raw amino-acid sequence, 399 residues long: Tyrosine--tRNA ligase (399 aa).

The 'HIGH' region motif lies at 42 to 51 (PTAPDLHLGH). The 'KMSKS' region signature appears at 226–230 (KMSKS). Residue lysine 229 participates in ATP binding. Residues 336–396 (MPIAAVLNKA…GKKAFARITL (61 aa)) enclose the S4 RNA-binding domain.

This sequence belongs to the class-I aminoacyl-tRNA synthetase family. TyrS type 2 subfamily. In terms of assembly, homodimer.

The protein localises to the cytoplasm. It catalyses the reaction tRNA(Tyr) + L-tyrosine + ATP = L-tyrosyl-tRNA(Tyr) + AMP + diphosphate + H(+). In terms of biological role, catalyzes the attachment of tyrosine to tRNA(Tyr) in a two-step reaction: tyrosine is first activated by ATP to form Tyr-AMP and then transferred to the acceptor end of tRNA(Tyr). This chain is Tyrosine--tRNA ligase, found in Pseudomonas fluorescens (strain Pf0-1).